We begin with the raw amino-acid sequence, 134 residues long: Holo-[acyl-carrier-protein] synthase (134 aa).

The Mg(2+) site is built by Asp8 and Glu57.

Belongs to the P-Pant transferase superfamily. AcpS family. Mg(2+) serves as cofactor.

It localises to the cytoplasm. It catalyses the reaction apo-[ACP] + CoA = holo-[ACP] + adenosine 3',5'-bisphosphate + H(+). Its function is as follows. Transfers the 4'-phosphopantetheine moiety from coenzyme A to a Ser of acyl-carrier-protein. This chain is Holo-[acyl-carrier-protein] synthase, found in Rhizobium etli (strain ATCC 51251 / DSM 11541 / JCM 21823 / NBRC 15573 / CFN 42).